Here is a 437-residue protein sequence, read N- to C-terminus: GTPase Der (437 aa).

2 consecutive EngA-type G domains span residues 2–167 and 180–356; these read ATVL…EKKG and IRVA…NSLF. GTP-binding positions include 8–15, 55–59, 118–121, 186–193, 233–237, and 299–302; these read GKSNVGKS, DTCGI, NKSE, GRPNAGKS, DTAGL, and NKID. Residues 357 to 437 enclose the KH-like domain; sequence YRVQTSAVNA…PIFLKFKNRH (81 aa).

Belongs to the TRAFAC class TrmE-Era-EngA-EngB-Septin-like GTPase superfamily. EngA (Der) GTPase family. Associates with the 50S ribosomal subunit.

In terms of biological role, GTPase that plays an essential role in the late steps of ribosome biogenesis. The sequence is that of GTPase Der from Thermosipho melanesiensis (strain DSM 12029 / CIP 104789 / BI429).